We begin with the raw amino-acid sequence, 82 residues long: MTKKAEELKMHEKDTGSSEVQIALLTGKIETLSAHIKQFKKDKHSSVGLLRAVNRRKKLLEYLKKNKFDSYKNVLTQLNLRK.

Belongs to the universal ribosomal protein uS15 family. In terms of assembly, part of the 30S ribosomal subunit. Forms a bridge to the 50S subunit in the 70S ribosome, contacting the 23S rRNA.

In terms of biological role, one of the primary rRNA binding proteins, it binds directly to 16S rRNA where it helps nucleate assembly of the platform of the 30S subunit by binding and bridging several RNA helices of the 16S rRNA. Forms an intersubunit bridge (bridge B4) with the 23S rRNA of the 50S subunit in the ribosome. This is Small ribosomal subunit protein uS15 from Pelagibacter ubique (strain HTCC1062).